Here is a 251-residue protein sequence, read N- to C-terminus: Hydroxyacylglutathione hydrolase (251 aa).

Positions 53, 55, 57, 58, 110, 127, and 165 each coordinate Zn(2+).

Belongs to the metallo-beta-lactamase superfamily. Glyoxalase II family. As to quaternary structure, monomer. Zn(2+) is required as a cofactor.

The catalysed reaction is an S-(2-hydroxyacyl)glutathione + H2O = a 2-hydroxy carboxylate + glutathione + H(+). It functions in the pathway secondary metabolite metabolism; methylglyoxal degradation; (R)-lactate from methylglyoxal: step 2/2. Thiolesterase that catalyzes the hydrolysis of S-D-lactoyl-glutathione to form glutathione and D-lactic acid. This Shigella dysenteriae serotype 1 (strain Sd197) protein is Hydroxyacylglutathione hydrolase.